The following is a 704-amino-acid chain: Pentatricopeptide repeat-containing protein At4g28010 (704 aa).

PPR repeat units follow at residues 71–105, 106–140, 141–175, 176–210, 211–245, 246–280, 281–315, 316–350, 351–385, 386–416, 423–453, 458–492, 493–527, 528–562, 563–597, 598–632, and 633–667; these read LAFA…DTFI, NFVS…GFAF, NVYN…SLMP, DVFS…GCSW, SLVT…GLEA, DLVV…GDSP, CAIT…GVRP, NVYT…DEEP, NAVT…RTRP, DNIT…MLKD, DVIS…LVEK, DRVT…KIVR, NSDT…ELQP, SVFD…NNFP, DVVS…GLSP, DLFT…GFEP, and DAHI…DIVL.

The protein belongs to the PPR family. P subfamily.

This is Pentatricopeptide repeat-containing protein At4g28010 from Arabidopsis thaliana (Mouse-ear cress).